The chain runs to 508 residues: DNA-directed RNA polymerase subunit Rpo1C (508 aa).

Residues 1-123 (MASLLWRDTS…EIKEKYGENL (123 aa)) are unknown. A DNA-directed RNA polymerase subunit Rpo1C region spans residues 124 to 508 (SEDVQKVLDD…IYKGYPKTKK (385 aa)).

Belongs to the RNA polymerase beta' chain family. As to quaternary structure, part of the RNA polymerase complex.

It is found in the cytoplasm. It catalyses the reaction RNA(n) + a ribonucleoside 5'-triphosphate = RNA(n+1) + diphosphate. Functionally, DNA-dependent RNA polymerase (RNAP) catalyzes the transcription of DNA into RNA using the four ribonucleoside triphosphates as substrates. Forms part of the jaw domain. This Thermoplasma acidophilum (strain ATCC 25905 / DSM 1728 / JCM 9062 / NBRC 15155 / AMRC-C165) protein is DNA-directed RNA polymerase subunit Rpo1C.